The sequence spans 716 residues: Polycystin-2 (716 aa).

Composition is skewed to basic and acidic residues over residues 1–10 (MNYGAADERW) and 30–41 (MVSEEYEHDKKK). The disordered stretch occupies residues 1 to 44 (MNYGAADERWANPPQPVAAAEHGPSFDHSMVSEEYEHDKKKNPA). Topologically, residues 1–72 (MNYGAADERW…SDGKIKLTAR (72 aa)) are cytoplasmic. The chain crosses the membrane as a helical span at residues 73-93 (SFMEVGGYAVFLIVLVYVAFA). Over 94–324 (QNSIQSYYYS…YQTSGGTRMM (231 aa)) the chain is Extracellular. 2 N-linked (GlcNAc...) asparagine glycosylation sites follow: Asn-150 and Asn-177. Residues Cys-180 and Cys-193 are joined by a disulfide bond. A helical membrane pass occupies residues 325 to 345 (IFEGIFCGFILYFIFEELFAI). Residues 346–355 (GRHRLHYLTQ) lie on the Cytoplasmic side of the membrane. A helical membrane pass occupies residues 356-376 (FWNLVDVVLLGFSVATIILSV). Residue Asn-377 is glycosylated (N-linked (GlcNAc...) asparagine). Topologically, residues 377 to 409 (NRTKTGVNRVNSVIENGLTNAPFDDVTSSENSY) are extracellular. Residues 410 to 430 (LNIKACVVFVAWVKVFKFISV) traverse the membrane as a helical segment. The Cytoplasmic segment spans residues 431 to 447 (NKTMSQLSSTLTRSAKD). Residues 448–468 (IGGFAVMFAVFFFAFAQFGYL) form a helical membrane-spanning segment. The Extracellular portion of the chain corresponds to 469–482 (CFGTQIADYSNLYN). Positions 483–497 (SAFALLRLILGDFNF) form an intramembrane region, pore-forming. Residues 498–510 (SALESCNRFFGPA) are Extracellular-facing. The helical transmembrane segment at 511–531 (FFIAYVFFVSFILLNMFLAII) threads the bilayer. Topologically, residues 532 to 716 (NDSYVEVKAE…ITSIADKKEE (185 aa)) are cytoplasmic. At Ser-534 the chain carries Phosphoserine; by CK2. A coiled-coil region spans residues 613–680 (EKVAEDIADE…IEKQRVQQQD (68 aa)). Positions 696–716 (RNRESAARRPTITSIADKKEE) are disordered.

This sequence belongs to the polycystin family. In terms of processing, phosphorylated. CK2 (kin-3 and kin-10) and calcineurin act antagonistically to regulate the phosphorylation state. As to expression, exclusively expressed in a subset of 3 categories of adult male sensory neurons: ray neurons, hook neurons and head cephalic (CEM) neurons. Expressed in the male tail.

It localises to the cell membrane. The protein resides in the cell projection. Its subcellular location is the cilium membrane. It is found in the cilium. The protein localises to the axon. It localises to the dendrite. The protein resides in the perikaryon. Its subcellular location is the endoplasmic reticulum membrane. Functions as a calcium permeable cation channel. Required for 2 aspects of male mating behavior: response to hermaphrodite contact and vulva location. Acts in the same pathway as lov-1 and atp-2 in response behavior. This Caenorhabditis elegans protein is Polycystin-2.